The chain runs to 309 residues: HPr kinase/phosphorylase (309 aa).

Active-site residues include H138 and K159. 153–160 provides a ligand contact to ATP; that stretch reads GQSGVGKS. S160 lines the Mg(2+) pocket. Residue D177 is the Proton acceptor; for phosphorylation activity. Proton donor; for dephosphorylation activity of the active site. An important for the catalytic mechanism of both phosphorylation and dephosphorylation region spans residues 201–210; sequence LEIRGLGIIN. E202 contributes to the Mg(2+) binding site. R243 is a catalytic residue. The segment at 264–269 is important for the catalytic mechanism of dephosphorylation; the sequence is PVRPGR.

The protein belongs to the HPrK/P family. As to quaternary structure, homohexamer. Requires Mg(2+) as cofactor.

It catalyses the reaction [HPr protein]-L-serine + ATP = [HPr protein]-O-phospho-L-serine + ADP + H(+). It carries out the reaction [HPr protein]-O-phospho-L-serine + phosphate + H(+) = [HPr protein]-L-serine + diphosphate. Functionally, catalyzes the ATP- as well as the pyrophosphate-dependent phosphorylation of a specific serine residue in HPr, a phosphocarrier protein of the phosphoenolpyruvate-dependent sugar phosphotransferase system (PTS). HprK/P also catalyzes the pyrophosphate-producing, inorganic phosphate-dependent dephosphorylation (phosphorolysis) of seryl-phosphorylated HPr (P-Ser-HPr). The two antagonistic activities of HprK/P are regulated by several intracellular metabolites, which change their concentration in response to the absence or presence of rapidly metabolisable carbon sources (glucose, fructose, etc.) in the growth medium. Also phosphorylates/dephosphorylates the HPr-like catabolite repression protein crh on a specific serine residue. Therefore, by controlling the phosphorylation state of HPr and crh, HPrK/P is a sensor enzyme that plays a major role in the regulation of carbon metabolism and sugar transport: it mediates carbon catabolite repression (CCR), and regulates PTS-catalyzed carbohydrate uptake and inducer exclusion. The protein is HPr kinase/phosphorylase of Bacillus anthracis (strain A0248).